Here is a 155-residue protein sequence, read N- to C-terminus: DNA-directed RNA polymerases I, II, and III subunit RPABC2 (155 aa).

Over residues 1 to 19 the composition is skewed to acidic residues; the sequence is MSDYEEAFNDGNENFEDFD. The segment at 1–57 is disordered; that stretch reads MSDYEEAFNDGNENFEDFDVEHFSDEETYEEKPQFKDGETTDANGKTIVTGGNGPED. Over residues 20–39 the composition is skewed to basic and acidic residues; that stretch reads VEHFSDEETYEEKPQFKDGE. Serine 24 is subject to Phosphoserine. Positions 111–132 are leucine-zipper; the sequence is LEGETDPLRIAMKELAEKKIPL.

The protein belongs to the archaeal Rpo6/eukaryotic RPB6 RNA polymerase subunit family. Component of the RNA polymerase I (Pol I), RNA polymerase II (Pol II) and RNA polymerase III (Pol III) complexes. Component of the RNA polymerase I (Pol I) complex consisting of 14 subunits: RPA135, RPA190, RPC40, RPA14, RPB5, RPO26, RPA43, RPB8, RPA12, RPB10, RPC19, RPC10, RPA49 and RPA34. The complex is composed of a horseshoe-shaped core containing ten subunits (RPA135, RPA190, RPB5, RPO26, RPB8, RPB10, RPC10, RPA12, RPC19 and RPC40) where RPA135 and RPA190 form the DNA-binding cleft. Outside of the core, RPA14 and RPA43 form the stalk that mediates interactions with transcription initiation factors and newly synthesized RNA. Component of the RNA polymerase II (Pol II) complex consisting of 12 subunits: RPO21, RPB2, RPB3, RPB4, RPB5, RPO26, RPB7, RPB8, RPB9, RPB10 and RPC10. Component of the RNA polymerase III (Pol III) complex consisting of 17 subunits.

It is found in the cytoplasm. The protein localises to the nucleus. Functionally, DNA-dependent RNA polymerases catalyze the transcription of DNA into RNA using the four ribonucleoside triphosphates as substrates. Common component of RNA polymerases I, II and III which synthesize ribosomal RNA precursors, mRNA precursors and many functional non-coding RNAs, and small RNAs, such as 5S rRNA and tRNAs, respectively. Pol II is the central component of the basal RNA polymerase II transcription machinery. RNA polymerases are composed of mobile elements that move relative to each other. In Pol II, RPB6 is part of the clamp element and together with parts of RPB1 and RPB2 forms a pocket to which the RPB4-RPB7 subcomplex binds. The polypeptide is DNA-directed RNA polymerases I, II, and III subunit RPABC2 (RPO26) (Saccharomyces cerevisiae (strain ATCC 204508 / S288c) (Baker's yeast)).